A 1016-amino-acid chain; its full sequence is Vacuolar membrane protease (1016 aa).

The disordered stretch occupies residues 1-36 (MAETESGTGNSPSHRLSETSNASGNRSHQQSKQIAS). Residues 1–57 (MAETESGTGNSPSHRLSETSNASGNRSHQQSKQIASYKSSKPNVFIRFIRAIFGYRK) lie on the Cytoplasmic side of the membrane. A helical transmembrane segment spans residues 58-78 (TSVTLFVFITIIATLILVELS). The Vacuolar portion of the chain corresponds to 79–408 (NSLDFSVKLP…FVIPASQLVL (330 aa)). Residues Asn147 and Asn177 are each glycosylated (N-linked (GlcNAc...) asparagine). Positions 191 and 203 each coordinate Zn(2+). The active-site Proton acceptor is Glu238. 3 residues coordinate Zn(2+): Glu239, Glu264, and His337. Residues 409 to 429 (INVTCLAVIPLISLPLLVIIF) form a helical membrane-spanning segment. Over 430 to 438 (NYKKNWHIG) the chain is Cytoplasmic. The helical transmembrane segment at 439–459 (FINAIKFPVSLVLSICILNII) threads the bilayer. Over 460–481 (THNVIASINEFLPNSSYDSIVS) the chain is Vacuolar. Residue Asn473 is glycosylated (N-linked (GlcNAc...) asparagine). A helical transmembrane segment spans residues 482–502 (TLYSLFLLLNYLFLNGINFIF). At 503 to 511 (KGYKGLYHD) the chain is on the cytoplasmic side. The chain crosses the membrane as a helical span at residues 512–532 (EKLILIIQTSFIYWVLLIVST). The Vacuolar segment spans residues 533–547 (NKLSKNKIGNDHTGE). A helical membrane pass occupies residues 548 to 568 (FPLIMLFLLQSIGALFGLFSW). Topologically, residues 569 to 646 (SFKKTTPDEL…SFSYDWSIQY (78 aa)) are cytoplasmic. The segment at 598 to 622 (YGSNEAELESGEPISSNSSVSLNSS) is disordered. Positions 612 to 622 (SSNSSVSLNSS) are enriched in low complexity. Residues 647-667 (VVIVPLSSLIVYNTGSLLLSG) traverse the membrane as a helical segment. Over 668–681 (LNKSIQESLNAEKL) the chain is Vacuolar. The N-linked (GlcNAc...) asparagine glycan is linked to Asn669. The chain crosses the membrane as a helical span at residues 682 to 702 (IFDLIQLVAVTLAIPFLPFIF). Residues 703-706 (KINR) lie on the Cytoplasmic side of the membrane. Residues 707–727 (LLVTALVLVFCSGFISIFLKS) form a helical membrane-spanning segment. Over 728–1016 (PFDQLNPLKL…LVSVSKYVEI (289 aa)) the chain is Vacuolar. N-linked (GlcNAc...) asparagine glycosylation is found at Asn778, Asn821, Asn850, Asn875, and Asn977.

It belongs to the peptidase M28 family. Zn(2+) is required as a cofactor.

It is found in the vacuole membrane. May be involved in vacuolar sorting and osmoregulation. The protein is Vacuolar membrane protease of Debaryomyces hansenii (strain ATCC 36239 / CBS 767 / BCRC 21394 / JCM 1990 / NBRC 0083 / IGC 2968) (Yeast).